We begin with the raw amino-acid sequence, 302 residues long: Vacuolar protein sorting-associated protein 26A (302 aa).

It belongs to the VPS26 family. Component of the retromer complex which consists of VPS29 (MAG1), VPS26 (VPS26A or VPS26B), VPS35 (VPS35A or VPS35B or VPS35C), VPS5/17 (SNX1 or SNX2A or SNX2B). Component of a retromer subcomplex consisting of VPS29 (MAG1), VPS26 (VPS26A or VPS26B), VPS35 (VPS35A or VPS35B or VPS35C).

The protein resides in the cytoplasm. Its subcellular location is the endosome membrane. It is found in the prevacuolar compartment membrane. It localises to the golgi apparatus. The protein localises to the trans-Golgi network membrane. Its function is as follows. Plays a role in vesicular protein sorting. Component of the membrane-associated retromer complex which is essential in endosome-to-Golgi retrograde transport. The VPS29-VPS26-VPS35 subcomplex may be involved in recycling of specific cargos from endosome to the plasma membrane. The protein is Vacuolar protein sorting-associated protein 26A (VPS26A) of Arabidopsis thaliana (Mouse-ear cress).